The following is a 360-amino-acid chain: UDP-N-acetylglucosamine--N-acetylmuramyl-(pentapeptide) pyrophosphoryl-undecaprenol N-acetylglucosamine transferase (360 aa).

UDP-N-acetyl-alpha-D-glucosamine is bound by residues 12–14, S198, and Q289; that span reads TAG.

It belongs to the glycosyltransferase 28 family. MurG subfamily.

Its subcellular location is the cell membrane. The catalysed reaction is Mur2Ac(oyl-L-Ala-gamma-D-Glu-L-Lys-D-Ala-D-Ala)-di-trans,octa-cis-undecaprenyl diphosphate + UDP-N-acetyl-alpha-D-glucosamine = beta-D-GlcNAc-(1-&gt;4)-Mur2Ac(oyl-L-Ala-gamma-D-Glu-L-Lys-D-Ala-D-Ala)-di-trans,octa-cis-undecaprenyl diphosphate + UDP + H(+). The protein operates within cell wall biogenesis; peptidoglycan biosynthesis. Its function is as follows. Cell wall formation. Catalyzes the transfer of a GlcNAc subunit on undecaprenyl-pyrophosphoryl-MurNAc-pentapeptide (lipid intermediate I) to form undecaprenyl-pyrophosphoryl-MurNAc-(pentapeptide)GlcNAc (lipid intermediate II). This is UDP-N-acetylglucosamine--N-acetylmuramyl-(pentapeptide) pyrophosphoryl-undecaprenol N-acetylglucosamine transferase from Streptococcus equi subsp. zooepidemicus (strain MGCS10565).